The primary structure comprises 794 residues: Copper-exporting P-type ATPase (794 aa).

HMA domains are found at residues 4-69 (TTLT…YDVA) and 71-137 (EQVE…YDAE). The Cu(+) site is built by cysteine 15, cysteine 18, cysteine 82, and cysteine 85. A run of 6 helical transmembrane segments spans residues 161-181 (IISA…ISPI), 186-206 (ILVN…IIGW), 225-245 (VLVA…MMMW), 255-275 (LYFE…YLEA), 410-430 (YFVP…IIFV), and 437-457 (PALV…LGLA). Aspartate 494 acts as the 4-aspartylphosphate intermediate in catalysis. Positions 689 and 693 each coordinate Mg(2+). 2 helical membrane passes run 747-767 (LFWA…GLLA) and 773-789 (AAMA…ALRL).

The protein belongs to the cation transport ATPase (P-type) (TC 3.A.3) family. Type IB subfamily.

Its subcellular location is the cell membrane. It carries out the reaction Cu(+)(in) + ATP + H2O = Cu(+)(out) + ADP + phosphate + H(+). Its function is as follows. Involved in copper export. The polypeptide is Copper-exporting P-type ATPase (copA) (Staphylococcus epidermidis (strain ATCC 35984 / DSM 28319 / BCRC 17069 / CCUG 31568 / BM 3577 / RP62A)).